The sequence spans 211 residues: Probable GTP-binding protein EngB (211 aa).

Positions 21 to 205 (LMATIVFVGR…KNRIYEIIRE (185 aa)) constitute an EngB-type G domain. Residues 29-36 (GRSNVGKS), 54-58 (GVTRK), 71-74 (DMPG), 151-154 (NKLD), and 184-186 (ISA) each bind GTP. The Mg(2+) site is built by Ser-36 and Thr-56.

This sequence belongs to the TRAFAC class TrmE-Era-EngA-EngB-Septin-like GTPase superfamily. EngB GTPase family. It depends on Mg(2+) as a cofactor.

Functionally, necessary for normal cell division and for the maintenance of normal septation. The sequence is that of Probable GTP-binding protein EngB from Pyrococcus abyssi (strain GE5 / Orsay).